The following is a 619-amino-acid chain: ATP-dependent zinc metalloprotease FtsH (619 aa).

Residues 1–11 (MSNTDPQPPQK) lie on the Cytoplasmic side of the membrane. A helical transmembrane segment spans residues 12–32 (LPLNWVVWTLAVALMLYYLPA). Residues 33–120 (MRDRPEPAIK…EVKEGHDASS (88 aa)) are Periplasmic-facing. A helical transmembrane segment spans residues 121–141 (SKVILLSYLPWIMFMIILFWL). At 142-619 (SRRTFRNFSG…IDECLQTGAS (478 aa)) the chain is on the cytoplasmic side. 216 to 223 (GPPGTGKT) provides a ligand contact to ATP. His437 contacts Zn(2+). The active site involves Glu438. The Zn(2+) site is built by His441 and Asp513.

This sequence in the central section; belongs to the AAA ATPase family. It in the C-terminal section; belongs to the peptidase M41 family. As to quaternary structure, homohexamer. It depends on Zn(2+) as a cofactor.

It localises to the cell inner membrane. Acts as a processive, ATP-dependent zinc metallopeptidase for both cytoplasmic and membrane proteins. Plays a role in the quality control of integral membrane proteins. This is ATP-dependent zinc metalloprotease FtsH from Hahella chejuensis (strain KCTC 2396).